The chain runs to 248 residues: ATP synthase subunit a (248 aa).

A propeptide spans 1 to 3 (removed in mature form); that stretch reads MLY. The next 7 membrane-spanning stretches (helical) occupy residues 24–44, 86–106, 117–137, 146–166, 183–203, 205–225, and 227–247; these read MSLT…FFIF, IYMP…LVGL, FALP…IGFV, VLLP…VELL, ITSG…TSGI, LLFV…ELIV, and ILQA…SLIL.

This sequence belongs to the ATPase A chain family. F-type ATPases have 2 components, CF(1) - the catalytic core - and CF(0) - the membrane proton channel. CF(1) has five subunits: alpha(3), beta(3), gamma(1), delta(1), epsilon(1). CF(0) has three main subunits: a, b and c.

It is found in the mitochondrion inner membrane. Mitochondrial membrane ATP synthase (F(1)F(0) ATP synthase or Complex V) produces ATP from ADP in the presence of a proton gradient across the membrane which is generated by electron transport complexes of the respiratory chain. F-type ATPases consist of two structural domains, F(1) - containing the extramembraneous catalytic core and F(0) - containing the membrane proton channel, linked together by a central stalk and a peripheral stalk. During catalysis, ATP synthesis in the catalytic domain of F(1) is coupled via a rotary mechanism of the central stalk subunits to proton translocation. Key component of the proton channel; it may play a direct role in the translocation of protons across the membrane. The polypeptide is ATP synthase subunit a (Zancudomyces culisetae (Gut fungus)).